Consider the following 163-residue polypeptide: CDP-archaeol synthase (163 aa).

Helical transmembrane passes span 4–24 (LLLG…APFI), 52–72 (LLLS…FLGI), 75–95 (IIIG…GAFI), 107–127 (APIL…ISFN), and 128–148 (VNLN…LHMF).

The protein belongs to the CDP-archaeol synthase family. Mg(2+) is required as a cofactor.

The protein localises to the cell membrane. The enzyme catalyses 2,3-bis-O-(geranylgeranyl)-sn-glycerol 1-phosphate + CTP + H(+) = CDP-2,3-bis-O-(geranylgeranyl)-sn-glycerol + diphosphate. It participates in membrane lipid metabolism; glycerophospholipid metabolism. Catalyzes the formation of CDP-2,3-bis-(O-geranylgeranyl)-sn-glycerol (CDP-archaeol) from 2,3-bis-(O-geranylgeranyl)-sn-glycerol 1-phosphate (DGGGP) and CTP. This reaction is the third ether-bond-formation step in the biosynthesis of archaeal membrane lipids. This is CDP-archaeol synthase from Sulfolobus acidocaldarius (strain ATCC 33909 / DSM 639 / JCM 8929 / NBRC 15157 / NCIMB 11770).